A 183-amino-acid polypeptide reads, in one-letter code: Capsid protein (183 aa).

The disordered stretch occupies residues 143–183; sequence LPETAVVRRRGRSPRRRTPSPRRRRSQSPRRRRSQSPASQC. Residues 149–176 show a composition bias toward basic residues; that stretch reads VRRRGRSPRRRTPSPRRRRSQSPRRRRS. Phosphoserine; by host is present on residues S155, S162, and S170. A 1; half-length repeat occupies 155 to 161; the sequence is SPRRRTP. Residues 155-177 are 3 X 8 AA repeats of S-P-R-R-R-[PR]-S-Q; it reads SPRRRTPSPRRRRSQSPRRRRSQ. A Bipartite nuclear localization signal motif is present at residues 158 to 175; that stretch reads RRTPSPRRRRSQSPRRRR. 2 repeat units span residues 162 to 169 and 170 to 177. The tract at residues 177–183 is RNA binding; it reads QSPASQC.

It belongs to the orthohepadnavirus core antigen family. In terms of assembly, homodimerizes, then multimerizes. Interacts with cytosol exposed regions of viral L glycoprotein present in the reticulum-to-Golgi compartment. Interacts with human FLNB. Phosphorylated form interacts with host importin alpha; this interaction depends on the exposure of the NLS, which itself depends upon genome maturation and/or phosphorylation of the capsid protein. Interacts with host NUP153. Phosphorylated by host SRPK1, SRPK2, and maybe protein kinase C or GAPDH. Phosphorylation is critical for pregenomic RNA packaging. Protein kinase C phosphorylation is stimulated by HBx protein and may play a role in transport of the viral genome to the nucleus at the late step during the viral replication cycle.

The protein resides in the virion. It localises to the host cytoplasm. In terms of biological role, self assembles to form an icosahedral capsid. Most capsids appear to be large particles with an icosahedral symmetry of T=4 and consist of 240 copies of capsid protein, though a fraction forms smaller T=3 particles consisting of 180 capsid proteins. Entering capsids are transported along microtubules to the nucleus. Phosphorylation of the capsid is thought to induce exposure of nuclear localization signal in the C-terminal portion of the capsid protein that allows binding to the nuclear pore complex via the importin (karyopherin-) alpha and beta. Capsids are imported in intact form through the nuclear pore into the nuclear basket, where it probably binds NUP153. Only capsids that contain the mature viral genome can release the viral DNA and capsid protein into the nucleoplasm. Immature capsids get stuck in the basket. Capsids encapsulate the pre-genomic RNA and the P protein. Pre-genomic RNA is reverse-transcribed into DNA while the capsid is still in the cytoplasm. The capsid can then either be directed to the nucleus, providing more genomes for transcription, or bud through the endoplasmic reticulum to provide new virions. This chain is Capsid protein, found in Gorilla gorilla (western gorilla).